The following is a 70-amino-acid chain: uncharacterized protein (70 aa).

A helical transmembrane segment spans residues 15-37 (LLVSSISESAVALIIITIRILFS).

It localises to the membrane. This is an uncharacterized protein from Saccharomyces cerevisiae (strain ATCC 204508 / S288c) (Baker's yeast).